The following is a 612-amino-acid chain: Glucoamylase (612 aa).

The signal sequence occupies residues 1–19 (MVSFSSCLRALALGSSVLA). Residues 20-25 (VQPVLR) constitute a propeptide that is removed on maturation. Asn-39 carries N-linked (GlcNAc...) asparagine glycosylation. Trp-146 serves as a coordination point for substrate. Asp-202 serves as the catalytic Proton acceptor. The Proton donor role is filled by Glu-205. 3 cysteine pairs are disulfide-bonded: Cys-236-Cys-239, Cys-248-Cys-475, and Cys-288-Cys-296. Residues 506–612 (CQVPTTVSVT…KSAVQSDVWR (107 aa)) enclose the CBM20 domain.

Belongs to the glycosyl hydrolase 15 family.

The enzyme catalyses Hydrolysis of terminal (1-&gt;4)-linked alpha-D-glucose residues successively from non-reducing ends of the chains with release of beta-D-glucose.. The sequence is that of Glucoamylase (glaA) from Aspergillus oryzae (strain ATCC 42149 / RIB 40) (Yellow koji mold).